We begin with the raw amino-acid sequence, 367 residues long: DNA replication and repair protein RecF (367 aa).

30-37 (GDNAQGKT) contacts ATP.

This sequence belongs to the RecF family.

It localises to the cytoplasm. Functionally, the RecF protein is involved in DNA metabolism; it is required for DNA replication and normal SOS inducibility. RecF binds preferentially to single-stranded, linear DNA. It also seems to bind ATP. This is DNA replication and repair protein RecF from Clostridium beijerinckii (strain ATCC 51743 / NCIMB 8052) (Clostridium acetobutylicum).